Here is a 425-residue protein sequence, read N- to C-terminus: Histone-binding protein RBBP7 (425 aa).

7 WD repeats span residues 47-122 (QWLP…KINH), 128-173 (RARY…LRLR), 181-217 (GLSW…KVVD), 228-269 (VVED…HSVD), 275-312 (VNCL…LHSF), 318-369 (EIFQ…LFIH), and 376-403 (ISDF…IWQM).

Belongs to the WD repeat RBAP46/RBAP48/MSI1 family. Binds directly to helix 1 of the histone fold of histone H4, a region that is not accessible when H4 is in chromatin.

Its subcellular location is the nucleus. Its function is as follows. Core histone-binding subunit that may target chromatin remodeling factors, histone acetyltransferases and histone deacetylases to their histone substrates in a manner that is regulated by nucleosomal DNA. Component of several complexes which regulate chromatin metabolism. The sequence is that of Histone-binding protein RBBP7 (rbbp7) from Xenopus tropicalis (Western clawed frog).